The primary structure comprises 1202 residues: DNA-directed RNA polymerase subunit beta (1202 aa).

Residues 1151-1162 (LRDMDEEDDDVV) show a composition bias toward acidic residues. Positions 1151 to 1202 (LRDMDEEDDDVVNVDALSKYAEKQNEKTNASAEEAKAPSTESAPVETKNNQN) are disordered. Residues 1189-1202 (STESAPVETKNNQN) are compositionally biased toward polar residues.

Belongs to the RNA polymerase beta chain family. In terms of assembly, the RNAP catalytic core consists of 2 alpha, 1 beta, 1 beta' and 1 omega subunit. When a sigma factor is associated with the core the holoenzyme is formed, which can initiate transcription.

It catalyses the reaction RNA(n) + a ribonucleoside 5'-triphosphate = RNA(n+1) + diphosphate. DNA-dependent RNA polymerase catalyzes the transcription of DNA into RNA using the four ribonucleoside triphosphates as substrates. In Pediococcus pentosaceus (strain ATCC 25745 / CCUG 21536 / LMG 10740 / 183-1w), this protein is DNA-directed RNA polymerase subunit beta.